The primary structure comprises 305 residues: tRNA pseudouridine synthase B (305 aa).

Asp48 (nucleophile) is an active-site residue.

The protein belongs to the pseudouridine synthase TruB family. Type 1 subfamily.

It catalyses the reaction uridine(55) in tRNA = pseudouridine(55) in tRNA. Functionally, responsible for synthesis of pseudouridine from uracil-55 in the psi GC loop of transfer RNAs. The sequence is that of tRNA pseudouridine synthase B from Pseudomonas fluorescens (strain ATCC BAA-477 / NRRL B-23932 / Pf-5).